The sequence spans 266 residues: Arcelin-4 (266 aa).

Positions 1-21 (MGSSKLLSLALLLVLLTHANS) are cleaved as a signal peptide. N-linked (GlcNAc...) asparagine glycans are attached at residues Asn-28 and Asn-92.

It belongs to the leguminous lectin family.

Its function is as follows. Seed storage. This carbohydrate-binding lectin has toxic effects on the important bean bruchid pests, Z.subfasciatus and A.obtectus. The chain is Arcelin-4 (ARC4) from Phaseolus vulgaris (Kidney bean).